We begin with the raw amino-acid sequence, 353 residues long: Uroporphyrinogen decarboxylase (353 aa).

Substrate is bound by residues 35-39 (RQAGR), Phe-54, Asp-84, Tyr-160, Ser-215, and His-329.

The protein belongs to the uroporphyrinogen decarboxylase family. In terms of assembly, homodimer.

It is found in the cytoplasm. It carries out the reaction uroporphyrinogen III + 4 H(+) = coproporphyrinogen III + 4 CO2. It participates in porphyrin-containing compound metabolism; protoporphyrin-IX biosynthesis; coproporphyrinogen-III from 5-aminolevulinate: step 4/4. Its function is as follows. Catalyzes the decarboxylation of four acetate groups of uroporphyrinogen-III to yield coproporphyrinogen-III. In Staphylococcus epidermidis (strain ATCC 12228 / FDA PCI 1200), this protein is Uroporphyrinogen decarboxylase.